The sequence spans 287 residues: Phosphatidylserine decarboxylase proenzyme (287 aa).

Catalysis depends on charge relay system; for autoendoproteolytic cleavage activity residues D90, H147, and S252. S252 serves as the catalytic Schiff-base intermediate with substrate; via pyruvic acid; for decarboxylase activity. S252 is subject to Pyruvic acid (Ser); by autocatalysis.

Belongs to the phosphatidylserine decarboxylase family. PSD-B subfamily. Prokaryotic type I sub-subfamily. In terms of assembly, heterodimer of a large membrane-associated beta subunit and a small pyruvoyl-containing alpha subunit. Pyruvate is required as a cofactor. In terms of processing, is synthesized initially as an inactive proenzyme. Formation of the active enzyme involves a self-maturation process in which the active site pyruvoyl group is generated from an internal serine residue via an autocatalytic post-translational modification. Two non-identical subunits are generated from the proenzyme in this reaction, and the pyruvate is formed at the N-terminus of the alpha chain, which is derived from the carboxyl end of the proenzyme. The autoendoproteolytic cleavage occurs by a canonical serine protease mechanism, in which the side chain hydroxyl group of the serine supplies its oxygen atom to form the C-terminus of the beta chain, while the remainder of the serine residue undergoes an oxidative deamination to produce ammonia and the pyruvoyl prosthetic group on the alpha chain. During this reaction, the Ser that is part of the protease active site of the proenzyme becomes the pyruvoyl prosthetic group, which constitutes an essential element of the active site of the mature decarboxylase.

It localises to the cell membrane. It catalyses the reaction a 1,2-diacyl-sn-glycero-3-phospho-L-serine + H(+) = a 1,2-diacyl-sn-glycero-3-phosphoethanolamine + CO2. The protein operates within phospholipid metabolism; phosphatidylethanolamine biosynthesis; phosphatidylethanolamine from CDP-diacylglycerol: step 2/2. Its function is as follows. Catalyzes the formation of phosphatidylethanolamine (PtdEtn) from phosphatidylserine (PtdSer). This is Phosphatidylserine decarboxylase proenzyme from Pseudomonas putida (strain ATCC 47054 / DSM 6125 / CFBP 8728 / NCIMB 11950 / KT2440).